A 187-amino-acid chain; its full sequence is Peptide deformylase (187 aa).

The Fe cation site is built by C94 and H136. The active site involves E137. H140 contacts Fe cation.

It belongs to the polypeptide deformylase family. Requires Fe(2+) as cofactor.

It carries out the reaction N-terminal N-formyl-L-methionyl-[peptide] + H2O = N-terminal L-methionyl-[peptide] + formate. Its function is as follows. Removes the formyl group from the N-terminal Met of newly synthesized proteins. Requires at least a dipeptide for an efficient rate of reaction. N-terminal L-methionine is a prerequisite for activity but the enzyme has broad specificity at other positions. The chain is Peptide deformylase from Chlorobaculum parvum (strain DSM 263 / NCIMB 8327) (Chlorobium vibrioforme subsp. thiosulfatophilum).